A 65-amino-acid polypeptide reads, in one-letter code: Ubiquinol-cytochrome-c reductase complex assembly factor 6 (65 aa).

At 1 to 9 (MPAGVSWPR) the chain is on the mitochondrial matrix side. A helical; Signal-anchor for type II membrane protein transmembrane segment spans residues 10–32 (YLRMFAASVLSMFAGAQVVHHYY). The Mitochondrial intermembrane segment spans residues 33-65 (RPDLSIPEIPPKPGELRTELLGLKERQMDSQKQ).

Belongs to the UQCC6 family. Highly expressed in skeletal and cardiac muscle (at protein level).

It is found in the mitochondrion inner membrane. In terms of biological role, required for the assembly and stability of the mitochondrial ubiquinol-cytochrome c reductase complex (complex III (CIII) or cytochrome b-c1 complex), a multisubunit transmembrane complex that is part of the mitochondrial electron transport chain (ETC) which drives oxidative phosphorylation. Mediates early complex III biogenesis. Participates in regulating the levels of electron transport chain proteins, and therefore energy supply, in response to changes in energy demand. Also required for cytochrome c oxidase complex (complex IV) assembly. The polypeptide is Ubiquinol-cytochrome-c reductase complex assembly factor 6 (uqcc6) (Danio rerio (Zebrafish)).